Here is an 87-residue protein sequence, read N- to C-terminus: Beta-defensin 109C (87 aa).

Positions 1–22 (MRLHLLLLILLLFSILLSPVRG) are cleaved as a signal peptide. Cystine bridges form between cysteine 31/cysteine 59, cysteine 38/cysteine 53, and cysteine 43/cysteine 60.

The protein belongs to the beta-defensin family.

The protein localises to the secreted. Functionally, has antibacterial activity. The protein is Beta-defensin 109C (DEFB109C) of Homo sapiens (Human).